Here is a 347-residue protein sequence, read N- to C-terminus: Phenylalanine--tRNA ligase alpha subunit (347 aa).

E261 provides a ligand contact to Mg(2+).

It belongs to the class-II aminoacyl-tRNA synthetase family. Phe-tRNA synthetase alpha subunit type 1 subfamily. Tetramer of two alpha and two beta subunits. The cofactor is Mg(2+).

The protein localises to the cytoplasm. The enzyme catalyses tRNA(Phe) + L-phenylalanine + ATP = L-phenylalanyl-tRNA(Phe) + AMP + diphosphate + H(+). The polypeptide is Phenylalanine--tRNA ligase alpha subunit (Streptococcus pyogenes serotype M3 (strain ATCC BAA-595 / MGAS315)).